A 118-amino-acid polypeptide reads, in one-letter code: Large ribosomal subunit protein uL18 (118 aa).

The protein belongs to the universal ribosomal protein uL18 family. Part of the 50S ribosomal subunit; part of the 5S rRNA/L5/L18/L25 subcomplex. Contacts the 5S and 23S rRNAs.

Its function is as follows. This is one of the proteins that bind and probably mediate the attachment of the 5S RNA into the large ribosomal subunit, where it forms part of the central protuberance. In Zymomonas mobilis subsp. mobilis (strain ATCC 31821 / ZM4 / CP4), this protein is Large ribosomal subunit protein uL18.